The chain runs to 73 residues: Long neurotoxin 2 (73 aa).

5 disulfide bridges follow: Cys-3–Cys-21, Cys-14–Cys-42, Cys-27–Cys-31, Cys-46–Cys-57, and Cys-58–Cys-63.

Belongs to the three-finger toxin family. Long-chain subfamily. Type II alpha-neurotoxin sub-subfamily. In terms of tissue distribution, expressed by the venom gland.

The protein resides in the secreted. Functionally, binds with high affinity to muscular (alpha-1/CHRNA1) and neuronal (alpha-7/CHRNA7) nicotinic acetylcholine receptor (nAChR) and inhibits acetylcholine from binding to the receptor, thereby impairing neuromuscular and neuronal transmission. This is Long neurotoxin 2 from Ophiophagus hannah (King cobra).